A 98-amino-acid chain; its full sequence is NADH-ubiquinone oxidoreductase chain 4L (98 aa).

A run of 3 helical transmembrane segments spans residues 1–21 (MPII…GMLI), 29–49 (SLLC…LMAL), and 58–78 (IVPV…LALL).

The protein belongs to the complex I subunit 4L family. In terms of assembly, core subunit of respiratory chain NADH dehydrogenase (Complex I) which is composed of 45 different subunits.

The protein resides in the mitochondrion inner membrane. It catalyses the reaction a ubiquinone + NADH + 5 H(+)(in) = a ubiquinol + NAD(+) + 4 H(+)(out). Core subunit of the mitochondrial membrane respiratory chain NADH dehydrogenase (Complex I) which catalyzes electron transfer from NADH through the respiratory chain, using ubiquinone as an electron acceptor. Part of the enzyme membrane arm which is embedded in the lipid bilayer and involved in proton translocation. The polypeptide is NADH-ubiquinone oxidoreductase chain 4L (MT-ND4L) (Semnopithecus entellus (Northern plains gray langur)).